The following is a 364-amino-acid chain: Fructose-bisphosphate aldolase B (364 aa).

Ala-2 is modified (N-acetylalanine). Lys-13 is subject to N6-succinyllysine. Ser-36 carries the post-translational modification Phosphoserine. A Phosphothreonine modification is found at Thr-39. Residue Arg-43 participates in beta-D-fructose 1,6-bisphosphate binding. Phosphoserine is present on Ser-89. Thr-119 is modified (phosphothreonine). Lys-121 is subject to N6-succinyllysine. Position 132 is a phosphoserine (Ser-132). Glu-188 functions as the Proton acceptor in the catalytic mechanism. The Schiff-base intermediate with dihydroxyacetone-P role is filled by Lys-230. Phosphoserine occurs at positions 272, 276, 299, and 301. A beta-D-fructose 1,6-bisphosphate-binding site is contributed by 272-274; that stretch reads SGG. Residue Arg-304 coordinates beta-D-fructose 1,6-bisphosphate. At Ser-309 the chain carries Phosphoserine. Lys-317 carries the post-translational modification N6-succinyllysine.

Belongs to the class I fructose-bisphosphate aldolase family. As to quaternary structure, homotetramer. Interacts with BBS1, BBS2, BBS4 and BBS7. Forms a ternary complex with G6PD and TP53; this interaction is direct.

The protein resides in the cytoplasm. It is found in the cytosol. Its subcellular location is the cytoskeleton. The protein localises to the microtubule organizing center. It localises to the centrosome. The protein resides in the centriolar satellite. The catalysed reaction is beta-D-fructose 1,6-bisphosphate = D-glyceraldehyde 3-phosphate + dihydroxyacetone phosphate. The enzyme catalyses beta-D-fructose 1-phosphate = D-glyceraldehyde + dihydroxyacetone phosphate. The protein operates within carbohydrate degradation; glycolysis; D-glyceraldehyde 3-phosphate and glycerone phosphate from D-glucose: step 4/4. Its pathway is carbohydrate biosynthesis; gluconeogenesis. It participates in carbohydrate metabolism; fructose metabolism. Catalyzes the aldol cleavage of fructose 1,6-biphosphate to form two triosephosphates dihydroxyacetone phosphate and D-glyceraldehyde 3-phosphate in glycolysis as well as the reverse stereospecific aldol addition reaction in gluconeogenesis. In fructolysis, metabolizes fructose 1-phosphate derived from the phosphorylation of dietary fructose by fructokinase into dihydroxyacetone phosphate and D-glyceraldehyde. Acts as an adapter independently of its enzymatic activity, exerts a tumor suppressor role by stabilizing the ternary complex with G6PD and TP53 to inhibit G6PD activity and keep oxidative pentose phosphate metabolism in check. This Rattus norvegicus (Rat) protein is Fructose-bisphosphate aldolase B (Aldob).